Consider the following 378-residue polypeptide: Cytochrome b (378 aa).

The next 4 helical transmembrane spans lie at 35 to 55 (FGSL…FLAM), 79 to 101 (WIIR…CHIG), 114 to 134 (TWIM…LGYV), and 180 to 200 (FFSL…LHIF). The heme b site is built by His85 and His99. Residues His184 and His198 each coordinate heme b. Residue His203 coordinates a ubiquinone. 4 helical membrane-spanning segments follow: residues 226-246 (YSAK…FISF), 290-310 (LGGV…PLTH), 326-346 (FFWL…QPVC), and 350-370 (VMCS…CGPL).

Belongs to the cytochrome b family. In terms of assembly, the main subunits of complex b-c1 are: cytochrome b, cytochrome c1 and the Rieske protein. Heme b serves as cofactor.

It is found in the mitochondrion inner membrane. Its function is as follows. Component of the ubiquinol-cytochrome c reductase complex (complex III or cytochrome b-c1 complex) that is part of the mitochondrial respiratory chain. The b-c1 complex mediates electron transfer from ubiquinol to cytochrome c. Contributes to the generation of a proton gradient across the mitochondrial membrane that is then used for ATP synthesis. In Paraspadella gotoi (Arrow worm), this protein is Cytochrome b (mt:Cyt-b).